Consider the following 878-residue polypeptide: Leucine--tRNA ligase (878 aa).

A 'HIGH' region motif is present at residues P43–H53. Residues K630–S634 carry the 'KMSKS' region motif. ATP is bound at residue K633.

It belongs to the class-I aminoacyl-tRNA synthetase family.

It is found in the cytoplasm. The enzyme catalyses tRNA(Leu) + L-leucine + ATP = L-leucyl-tRNA(Leu) + AMP + diphosphate. In Rhodopseudomonas palustris (strain BisB5), this protein is Leucine--tRNA ligase.